Consider the following 98-residue polypeptide: Ribonuclease kappa (98 aa).

2 helical membrane-spanning segments follow: residues 13–33 and 65–85; these read ACGIVLSAWGVIMLIMLGIFF and VSYNCFIAASLYLLLGGFSFC.

It belongs to the RNase K family. In terms of assembly, interacts with the proton translocation complex V0 of the V-ATPase. Interacts with ATP6AP1. As to expression, expressed in brain (at protein level).

It localises to the endomembrane system. It is found in the cytoplasmic vesicle. Its subcellular location is the clathrin-coated vesicle membrane. Endoribonuclease which preferentially cleaves ApU and ApG phosphodiester bonds. Hydrolyzes UpU bonds at a lower rate. Regulates the activity of vacuolar (H+)-ATPase (V-ATPase) which is responsible for acidifying and maintaining the pH of intracellular compartments. Required at an early stage of receptor-mediated endocytosis. The polypeptide is Ribonuclease kappa (RNASEK) (Bos taurus (Bovine)).